Consider the following 444-residue polypeptide: Cortexillin-1 (444 aa).

Residues 1 to 227 (MAGKDWEIVQ…VLYTSLFFHA (227 aa)) form an actin-binding region. Calponin-homology (CH) domains lie at 8-115 (IVQE…RKYR) and 124-229 (KSSE…HAYR). 2 coiled-coil regions span residues 227-352 (AYRA…TRIR) and 410-434 (LATK…DLKA).

Belongs to the cortexillin family. Homodimer; parallel.

It localises to the cytoplasm. Its subcellular location is the cytoskeleton. Its function is as follows. Actin-bundling protein. When linked to F-actin the actin filaments form preferentially anti-parallel bundles that associate into meshworks. Plays a major role in cytokinesis. Negatively regulates cortical localization of rapgap1. The polypeptide is Cortexillin-1 (ctxA) (Dictyostelium discoideum (Social amoeba)).